A 134-amino-acid polypeptide reads, in one-letter code: GSH-induced LITAF domain protein (134 aa).

Residues 33–113 enclose the LITAF domain; the sequence is DPLGAPIQQT…CGNKVADFEK (81 aa). Zn(2+) is bound by residues cysteine 53 and cysteine 56. The membrane-binding amphipathic helix stretch occupies residues 68-88; sequence PGVAAVVACMMPFMLGFCFLC. The Zn(2+) site is built by cysteine 101 and cysteine 104.

It belongs to the CDIP1/LITAF family. In terms of assembly, interacts (via N- and C-terminal) with MIEL1 and LSD1 (via N-terminus).

It localises to the cell membrane. Its function is as follows. Acts as a membrane anchor, bringing other regulators of programmed cell death (PCD) to the plasma membrane. Negatively regulates hypersensitive cell death. This is GSH-induced LITAF domain protein from Arabidopsis thaliana (Mouse-ear cress).